The sequence spans 95 residues: Aspartyl/glutamyl-tRNA(Asn/Gln) amidotransferase subunit C (95 aa).

This sequence belongs to the GatC family. As to quaternary structure, heterotrimer of A, B and C subunits.

It carries out the reaction L-glutamyl-tRNA(Gln) + L-glutamine + ATP + H2O = L-glutaminyl-tRNA(Gln) + L-glutamate + ADP + phosphate + H(+). It catalyses the reaction L-aspartyl-tRNA(Asn) + L-glutamine + ATP + H2O = L-asparaginyl-tRNA(Asn) + L-glutamate + ADP + phosphate + 2 H(+). Its function is as follows. Allows the formation of correctly charged Asn-tRNA(Asn) or Gln-tRNA(Gln) through the transamidation of misacylated Asp-tRNA(Asn) or Glu-tRNA(Gln) in organisms which lack either or both of asparaginyl-tRNA or glutaminyl-tRNA synthetases. The reaction takes place in the presence of glutamine and ATP through an activated phospho-Asp-tRNA(Asn) or phospho-Glu-tRNA(Gln). This is Aspartyl/glutamyl-tRNA(Asn/Gln) amidotransferase subunit C from Nitratidesulfovibrio vulgaris (strain DSM 19637 / Miyazaki F) (Desulfovibrio vulgaris).